The chain runs to 913 residues: Cadherin-4 (913 aa).

The signal sequence occupies residues 1-20 (MTTGSVLPLLLLGLSGALRA). The propeptide occupies 21–166 (HREDLTVREA…SSGGLRRQKR (146 aa)). N-linked (GlcNAc...) asparagine glycosylation occurs at Asn146. Cadherin domains are found at residues 167–274 (DWVI…RPEF), 275–389 (INQV…PPEF), 390–504 (TTST…APYF), 505–610 (PSNH…DNAP), and 611–721 (QLLP…TVGA). Over 167-731 (DWVIPPINVP…VAAAGLGTGA (565 aa)) the chain is Extracellular. N-linked (GlcNAc...) asparagine glycans are attached at residues Asn280, Asn409, Asn554, Asn629, Asn658, and Asn699. Residues 732–753 (IVAILICIVILLIMVLLFVVWM) traverse the membrane as a helical segment. Residues 754–913 (KRREKERHTK…ADMYGGGEED (160 aa)) lie on the Cytoplasmic side of the membrane.

In terms of tissue distribution, distributed widely in mouse tissues with high levels present in brain, skeletal muscle and thymus.

The protein localises to the cell membrane. Functionally, cadherins are calcium-dependent cell adhesion proteins. They preferentially interact with themselves in a homophilic manner in connecting cells; cadherins may thus contribute to the sorting of heterogeneous cell types. May play an important role in retinal development. The sequence is that of Cadherin-4 (Cdh4) from Mus musculus (Mouse).